The chain runs to 71 residues: NAD(P)H-quinone oxidoreductase subunit O (71 aa).

This sequence belongs to the complex I NdhO subunit family. As to quaternary structure, NDH-1 can be composed of about 15 different subunits; different subcomplexes with different compositions have been identified which probably have different functions.

It localises to the cellular thylakoid membrane. The catalysed reaction is a plastoquinone + NADH + (n+1) H(+)(in) = a plastoquinol + NAD(+) + n H(+)(out). The enzyme catalyses a plastoquinone + NADPH + (n+1) H(+)(in) = a plastoquinol + NADP(+) + n H(+)(out). Its function is as follows. NDH-1 shuttles electrons from an unknown electron donor, via FMN and iron-sulfur (Fe-S) centers, to quinones in the respiratory and/or the photosynthetic chain. The immediate electron acceptor for the enzyme in this species is believed to be plastoquinone. Couples the redox reaction to proton translocation, and thus conserves the redox energy in a proton gradient. Cyanobacterial NDH-1 also plays a role in inorganic carbon-concentration. The polypeptide is NAD(P)H-quinone oxidoreductase subunit O (Picosynechococcus sp. (strain ATCC 27264 / PCC 7002 / PR-6) (Agmenellum quadruplicatum)).